The following is a 227-amino-acid chain: 6,7-dimethyl-8-ribityllumazine synthase, chloroplastic (227 aa).

The transit peptide at 1 to 71 directs the protein to the chloroplast; that stretch reads MKSLASPPCL…LRSSFVQTAA (71 aa). 5-amino-6-(D-ribitylamino)uracil is bound by residues Phe94, 128–130, and 152–154; these read SFE and AVI. A (2S)-2-hydroxy-3-oxobutyl phosphate-binding site is contributed by 157–158; the sequence is DT. The active-site Proton donor is the His160. Phe185 contributes to the 5-amino-6-(D-ribitylamino)uracil binding site. Arg199 contributes to the (2S)-2-hydroxy-3-oxobutyl phosphate binding site.

It belongs to the DMRL synthase family. Oligomer forming an icosahedral capsid.

It localises to the plastid. The protein localises to the chloroplast. The enzyme catalyses (2S)-2-hydroxy-3-oxobutyl phosphate + 5-amino-6-(D-ribitylamino)uracil = 6,7-dimethyl-8-(1-D-ribityl)lumazine + phosphate + 2 H2O + H(+). Its pathway is cofactor biosynthesis; riboflavin biosynthesis; riboflavin from 2-hydroxy-3-oxobutyl phosphate and 5-amino-6-(D-ribitylamino)uracil: step 1/2. Functionally, catalyzes the formation of 6,7-dimethyl-8-ribityllumazine by condensation of 5-amino-6-(D-ribitylamino)uracil with 3,4-dihydroxy-2-butanone 4-phosphate. This is the penultimate step in the biosynthesis of riboflavin. The chain is 6,7-dimethyl-8-ribityllumazine synthase, chloroplastic from Arabidopsis thaliana (Mouse-ear cress).